The sequence spans 301 residues: Haloalkane dehalogenase (301 aa).

Catalysis depends on Asp123, which acts as the Nucleophile. The active-site Proton donor is the Asp250. The active-site Proton acceptor is His279.

Belongs to the haloalkane dehalogenase family. Type 1 subfamily. In terms of assembly, monomer.

It carries out the reaction 1-haloalkane + H2O = a halide anion + a primary alcohol + H(+). In terms of biological role, catalyzes hydrolytic cleavage of carbon-halogen bonds in halogenated aliphatic compounds, leading to the formation of the corresponding primary alcohols, halide ions and protons. The protein is Haloalkane dehalogenase of Phenylobacterium zucineum (strain HLK1).